Consider the following 245-residue polypeptide: 1-(5-phosphoribosyl)-5-[(5-phosphoribosylamino)methylideneamino] imidazole-4-carboxamide isomerase (245 aa).

D8 functions as the Proton acceptor in the catalytic mechanism. The active-site Proton donor is the D130.

This sequence belongs to the HisA/HisF family.

It is found in the cytoplasm. The enzyme catalyses 1-(5-phospho-beta-D-ribosyl)-5-[(5-phospho-beta-D-ribosylamino)methylideneamino]imidazole-4-carboxamide = 5-[(5-phospho-1-deoxy-D-ribulos-1-ylimino)methylamino]-1-(5-phospho-beta-D-ribosyl)imidazole-4-carboxamide. It functions in the pathway amino-acid biosynthesis; L-histidine biosynthesis; L-histidine from 5-phospho-alpha-D-ribose 1-diphosphate: step 4/9. In Pseudomonas fluorescens (strain ATCC BAA-477 / NRRL B-23932 / Pf-5), this protein is 1-(5-phosphoribosyl)-5-[(5-phosphoribosylamino)methylideneamino] imidazole-4-carboxamide isomerase.